A 185-amino-acid chain; its full sequence is piRNA-mediated silencing protein C19orf84 homolog (185 aa).

Disordered stretches follow at residues 1–38 (MDEL…PSLL) and 93–185 (HIWP…EADY). Over residues 11-25 (NGDNLSLPSAGTESW) the composition is skewed to polar residues. Low complexity predominate over residues 26-38 (PTSATPGLPPSLL). Over residues 118 to 130 (RPSRGWGRGRGRG) the composition is skewed to basic residues. Basic and acidic residues predominate over residues 139-150 (GPERAEERERNM).

In terms of assembly, interacts with SPOCD1.

The protein resides in the nucleus. Its subcellular location is the nucleoplasm. Functionally, protein adapter involved in piRNA-directed transposon methylation by connecting PIWIL4-piRNA and DNA methylation machineries. The PIWIL4-piRNA pathway plays a central role during spermatogenesis by directing transposon DNA methylation and silencing, thereby preventing their mobilization, which is essential for the germline integrity. This chain is piRNA-mediated silencing protein C19orf84 homolog, found in Mus musculus (Mouse).